A 1162-amino-acid chain; its full sequence is MKFGKTYVTHQIPEWSIYYMNYKQLKKIIKSIDSAANTNVDESKYPEVISDTLGSFFYDLDRDIEKVDSFYNTKFKEYNRRLNKIFQVLGYQDGQITHNIESSEELDEIINILIELKSLFRNLKWFAELNHKGFIKILKKLDKKLTSILSQHSGVSVGGVSNHNQEAYMGSRINALPFANGTEASNCLDSIHHILSRIETRNDVVQETIPVENNETSISALIKNDDFEGLKKHITIKSSQKFLISTLNKAALANSTKCIDVIWNQLDMLYDDSDFNGRNFFHQHIISLGKAQFIREEQIVPGEVTNRLIGGDNGPDNSNKNDNPIGLLYILNKLKHKRLILAEDHYHRTPLHYASQYGLVEVTRYLVEFGVKWGLINTSISIDDVSIWGDQEGLTPLHLSIIGKHPKTTETLLGFNKAQTLTCPNLLLLAVRLNSPQILNSLIVEGNIDVNYTDIDHRNETALYIASKLNHPDLVEFLLESNANTEIGENVFGWTPIFIAASEGFMTIVKLLKEYGASYDIVDDSGWLPMEHACLRGHLDVTDLLLPKNEKLLLYDMYHPENNLPRIPSLAASPVLTGSDDGTVSTSSIDKLPEPQKNTVNQFYKQLKNNSSNNVSRSTSPKRNKRYKPVKSFGHRYLNEDESLILLTLGTTDLRDTNVPVELNKVSLAKSFATELDTALSLSITCRHKLTNNPVEPPVVVDLPLEDFHGSATDPISFKLSNDLTVNDVIITFDIIPTYQVNKKVIGRAIALLKDAYTKVGPNLRSLNNSIAIPIIESTNLDILGTIRFEYLQVLPFKHKAMSIARSDTYWKQLVSTRVIGHRGLGKNLSGKKSLQLGENTVESFIAAASLGASYVEFDVQLTKDHVPVVYHDFTVAESGVDIPMHLLTLEQFMGFNTPTEKPTHTVDDEVLTRGKQRAQSSYQLSNNHNDDIEKEFANQRDERMKFTKTWKNQGYKGNLRGSSVASNFVTLRELFRKLPNNVGFNIEVKYPMLDEAQLEDMGEIGVDLNFFVDTILKVIYDENTTGRDIVFSSFHPDICLLLSLKQPTMPVLFLTEAGTAPMYDIRASSLQNAVRFSKKWNLLGIVSNALALIKTPRLAQVVKSMGLVCVTYGTENNEPELAKIQMRAGVDAVIVDSVLAVREGLREHNETMNEFEDSPTE.

Positions 1–155 (MKFGKTYVTH…TSILSQHSGV (155 aa)) constitute an SPX domain. ANK repeat units follow at residues 346-375 (YHRTPLHYASQYGLVEVTRYLVEFGVKWGL), 392-421 (EGLTPLHLSIIGKHPKTTETLLGFNKAQTL), 423-452 (CPNLLLLAVRLNSPQILNSLIVEGNIDVNY), 458-487 (RNETALYIASKLNHPDLVEFLLESNANTEI), 492-521 (FGWTPIFIAASEGFMTIVKLLKEYGASYDI), and 525-554 (SGWLPMEHACLRGHLDVTDLLLPKNEKLLL). A GP-PDE domain is found at 817–1146 (TRVIGHRGLG…DSVLAVREGL (330 aa)).

It belongs to the GDE1 family.

It is found in the cytoplasm. It catalyses the reaction sn-glycerol 3-phosphocholine + H2O = sn-glycerol 3-phosphate + choline + H(+). Glycerophosphocholine glycerophosphodiesterase responsible for the hydrolysis of intracellular glycerophosphocholine into glycerol-phosphate and choline. The choline is used for phosphatidyl-choline synthesis. Required for utilization of glycerophosphocholine as phosphate source. C.albicans can utilize GroPCho through transport and intracellular hydrolysis or through extracellular hydrolysis. This Candida albicans (strain SC5314 / ATCC MYA-2876) (Yeast) protein is Glycerophosphocholine phosphodiesterase GDE1.